A 335-amino-acid chain; its full sequence is Glyceraldehyde-3-phosphate dehydrogenase 1 (335 aa).

NAD(+)-binding positions include 12 to 13 (RI), Asp34, Arg78, and Ser120. D-glyceraldehyde 3-phosphate-binding positions include 151 to 153 (SCT) and Thr182. Residue Cys152 is the Nucleophile of the active site. Asn183 contacts NAD(+). Residues Arg197, 210–211 (TG), and Arg233 contribute to the D-glyceraldehyde 3-phosphate site. NAD(+) is bound at residue Asn315.

This sequence belongs to the glyceraldehyde-3-phosphate dehydrogenase family. Homotetramer. Interacts with BrxC. Post-translationally, in response to oxidative stress, the active site Cys likely reacts with bacillithiol (BSH) to form mixed disulfides to protect the Cys residue against overoxidation. S-bacillithiolation presumably leads to loss of catalytic activity. Debacillithiolation by monothiol bacilliredoxin BrxC restores the activity.

Its subcellular location is the cytoplasm. It catalyses the reaction D-glyceraldehyde 3-phosphate + phosphate + NAD(+) = (2R)-3-phospho-glyceroyl phosphate + NADH + H(+). It participates in carbohydrate degradation; glycolysis; pyruvate from D-glyceraldehyde 3-phosphate: step 1/5. Involved in the glycolysis. Catalyzes the oxidative phosphorylation of glyceraldehyde 3-phosphate (G3P) to 1,3-bisphosphoglycerate (BPG) using the cofactor NAD. The first reaction step involves the formation of a hemiacetal intermediate between G3P and a cysteine residue, and this hemiacetal intermediate is then oxidized to a thioester, with concomitant reduction of NAD to NADH. The reduced NADH is then exchanged with the second NAD, and the thioester is attacked by a nucleophilic inorganic phosphate to produce BPG. The sequence is that of Glyceraldehyde-3-phosphate dehydrogenase 1 from Bacillus subtilis (strain 168).